Consider the following 830-residue polypeptide: WD repeat-containing protein 75 (830 aa).

WD repeat units lie at residues 4-43 (EENI…KVYS), 47-86 (EECV…KLWD), 90-131 (GILI…QLVS), 145-184 (KELS…YFFK), 193-231 (LSSS…RLWR), 237-276 (KKYT…VEWR), 279-318 (TEKN…IIIH), 324-362 (SAVI…QFYS), and 376-423 (QQEY…KLWM). Residue lysine 123 forms a Glycyl lysine isopeptide (Lys-Gly) (interchain with G-Cter in SUMO2) linkage. Lysine 427 participates in a covalent cross-link: Glycyl lysine isopeptide (Lys-Gly) (interchain with G-Cter in SUMO2). WD repeat units follow at residues 430–474 (GFIL…KVWI), 487–525 (GWTC…TIWD), 529–569 (WELK…CCWN), and 574–611 (ALEW…FVFK). At lysine 466 the chain carries N6-acetyllysine. A phosphoserine mark is found at serine 664 and serine 672. Lysine 676 participates in a covalent cross-link: Glycyl lysine isopeptide (Lys-Gly) (interchain with G-Cter in SUMO2). The segment at 763–806 (SAKEIPEDVDMEEEKESEDSDEENDFTEKVQDTSNTGLGEDIIH) is disordered. Residues 769–787 (EDVDMEEEKESEDSDEEND) show a composition bias toward acidic residues. Phosphoserine occurs at positions 779, 782, 796, and 811.

Component of the proposed t-UTP subcomplex of the ribosomal small subunit (SSU) processome. SSU processome is composed of more than 70 proteins and the RNA chaperone small nucleolar RNA (snoRNA) U3.

It is found in the nucleus. The protein localises to the nucleolus. Ribosome biogenesis factor. Part of the small subunit (SSU) processome, first precursor of the small eukaryotic ribosomal subunit. During the assembly of the SSU processome in the nucleolus, many ribosome biogenesis factors, an RNA chaperone and ribosomal proteins associate with the nascent pre-rRNA and work in concert to generate RNA folding, modifications, rearrangements and cleavage as well as targeted degradation of pre-ribosomal RNA by the RNA exosome. Involved in nucleolar processing of pre-18S ribosomal RNA. Required for optimal pre-ribosomal RNA transcription by RNA polymerase I. The polypeptide is WD repeat-containing protein 75 (Homo sapiens (Human)).